Consider the following 162-residue polypeptide: NADH-quinone oxidoreductase subunit I (162 aa).

2 consecutive 4Fe-4S ferredoxin-type domains span residues Leu52 to Gly82 and Val93 to Asn122. Positions 62, 65, 68, 72, 102, 105, 108, and 112 each coordinate [4Fe-4S] cluster.

Belongs to the complex I 23 kDa subunit family. As to quaternary structure, NDH-1 is composed of 14 different subunits. Subunits NuoA, H, J, K, L, M, N constitute the membrane sector of the complex. [4Fe-4S] cluster is required as a cofactor.

The protein resides in the cell inner membrane. The catalysed reaction is a quinone + NADH + 5 H(+)(in) = a quinol + NAD(+) + 4 H(+)(out). NDH-1 shuttles electrons from NADH, via FMN and iron-sulfur (Fe-S) centers, to quinones in the respiratory chain. The immediate electron acceptor for the enzyme in this species is believed to be ubiquinone. Couples the redox reaction to proton translocation (for every two electrons transferred, four hydrogen ions are translocated across the cytoplasmic membrane), and thus conserves the redox energy in a proton gradient. The polypeptide is NADH-quinone oxidoreductase subunit I (Nitrobacter hamburgensis (strain DSM 10229 / NCIMB 13809 / X14)).